We begin with the raw amino-acid sequence, 351 residues long: Dihydroorotate dehydrogenase (quinone) (351 aa).

Residues 67 to 71 (AGFDK) and Thr-91 contribute to the FMN site. Lys-71 contributes to the substrate binding site. 116-120 (NAMGF) provides a ligand contact to substrate. Residues Asn-145 and Asn-178 each coordinate FMN. A substrate-binding site is contributed by Asn-178. The active-site Nucleophile is Ser-181. Substrate is bound at residue Asn-183. Residues Lys-214 and Thr-242 each contribute to the FMN site. Residue 243 to 244 (NT) coordinates substrate. FMN-binding positions include Gly-262, Gly-291, and 312 to 313 (YS).

The protein belongs to the dihydroorotate dehydrogenase family. Type 2 subfamily. In terms of assembly, monomer. Requires FMN as cofactor.

The protein resides in the cell membrane. The catalysed reaction is (S)-dihydroorotate + a quinone = orotate + a quinol. Its pathway is pyrimidine metabolism; UMP biosynthesis via de novo pathway; orotate from (S)-dihydroorotate (quinone route): step 1/1. Functionally, catalyzes the conversion of dihydroorotate to orotate with quinone as electron acceptor. In Helicobacter pylori (strain G27), this protein is Dihydroorotate dehydrogenase (quinone).